The primary structure comprises 403 residues: S-adenosylmethionine synthase (403 aa).

Residue histidine 16 participates in ATP binding. Aspartate 18 contributes to the Mg(2+) binding site. Position 44 (glutamate 44) interacts with K(+). Positions 57 and 110 each coordinate L-methionine. Residues 110–120 form a flexible loop region; the sequence is QSAHIAQGVDA. ATP-binding positions include 175-177, aspartate 253, 259-260, alanine 276, and lysine 280; these read DSK and RK. Aspartate 253 serves as a coordination point for L-methionine. Position 284 (lysine 284) interacts with L-methionine.

This sequence belongs to the AdoMet synthase family. Homotetramer; dimer of dimers. Requires Mg(2+) as cofactor. The cofactor is K(+).

The protein localises to the cytoplasm. It carries out the reaction L-methionine + ATP + H2O = S-adenosyl-L-methionine + phosphate + diphosphate. It functions in the pathway amino-acid biosynthesis; S-adenosyl-L-methionine biosynthesis; S-adenosyl-L-methionine from L-methionine: step 1/1. Catalyzes the formation of S-adenosylmethionine (AdoMet) from methionine and ATP. The overall synthetic reaction is composed of two sequential steps, AdoMet formation and the subsequent tripolyphosphate hydrolysis which occurs prior to release of AdoMet from the enzyme. This is S-adenosylmethionine synthase from Erythrobacter litoralis (strain HTCC2594).